The following is a 227-amino-acid chain: Ubiquitin domain-containing protein 1 (227 aa).

The segment covering 1-14 has biased composition (basic and acidic residues); that stretch reads MGGCVGRERAETRG. Residues 1–45 form a disordered region; sequence MGGCVGRERAETRGRGSRTQRKRGGRNEPLKKDKPKWKSDYPMTE. The segment covering 15 to 24 has biased composition (basic residues); sequence RGSRTQRKRG. Residues 25–39 show a composition bias toward basic and acidic residues; that stretch reads GRNEPLKKDKPKWKS. Residues 150-225 form the Ubiquitin-like domain; that stretch reads FQLKVRLSTG…IQVIVNQPAP (76 aa).

In terms of biological role, may be involved in the regulation of cellular senescence through a positive feedback loop with TP53. The chain is Ubiquitin domain-containing protein 1 (ubtd1) from Danio rerio (Zebrafish).